We begin with the raw amino-acid sequence, 358 residues long: Phenylalanine--tRNA ligase alpha subunit (358 aa).

Glu-279 is a binding site for Mg(2+).

Belongs to the class-II aminoacyl-tRNA synthetase family. Phe-tRNA synthetase alpha subunit type 1 subfamily. In terms of assembly, tetramer of two alpha and two beta subunits. The cofactor is Mg(2+).

The protein resides in the cytoplasm. The catalysed reaction is tRNA(Phe) + L-phenylalanine + ATP = L-phenylalanyl-tRNA(Phe) + AMP + diphosphate + H(+). The protein is Phenylalanine--tRNA ligase alpha subunit of Variovorax paradoxus (strain S110).